The chain runs to 96 residues: Protein RnfH (96 aa).

The protein belongs to the UPF0125 (RnfH) family.

In Hahella chejuensis (strain KCTC 2396), this protein is Protein RnfH.